A 702-amino-acid chain; its full sequence is K(+)-insensitive pyrophosphate-energized proton pump (702 aa).

Helical transmembrane passes span 3–23 (GIYL…ALTI), 63–83 (AVVF…GFLI), 130–150 (MLVA…LVGI), and 162–182 (VALG…GGIF). K184 lines the substrate pocket. Mg(2+)-binding residues include D187, D191, N214, and D217. Transmembrane regions (helical) follow at residues 234 to 254 (AVTV…VPAM), 255 to 275 (TSMM…SILG), 294 to 314 (GFLV…AIVP), 329 to 349 (GFDL…LIWV), 379 to 399 (GLAI…AAII), and 407 to 427 (LFGI…VVAL). D435 serves as a coordination point for Mg(2+). 4 consecutive transmembrane segments (helical) span residues 466-486 (AVTK…LFAA), 517-537 (YVVV…SMGM), 586-606 (IIPS…ILGI), and 612-632 (AFSA…FVAI). 3 residues coordinate Ca(2+): D642, D668, and D672. Residue K675 coordinates substrate.

It belongs to the H(+)-translocating pyrophosphatase (TC 3.A.10) family. K(+)-insensitive subfamily. Homodimer. Requires Mg(2+) as cofactor.

The protein resides in the cell inner membrane. It catalyses the reaction diphosphate + H2O + H(+)(in) = 2 phosphate + 2 H(+)(out). Functionally, proton pump that utilizes the energy of pyrophosphate hydrolysis as the driving force for proton movement across the membrane. Generates a proton motive force. The sequence is that of K(+)-insensitive pyrophosphate-energized proton pump from Rhodospirillum rubrum (strain ATCC 11170 / ATH 1.1.1 / DSM 467 / LMG 4362 / NCIMB 8255 / S1).